The chain runs to 397 residues: 2-isopropylmalate synthase 1 (397 aa).

Residues 6-268 form the Pyruvate carboxyltransferase domain; sequence VIVFDTTLRD…VHGINTKEIY (263 aa). Mn(2+) contacts are provided by Asp15, His203, His205, and Asn239.

The protein belongs to the alpha-IPM synthase/homocitrate synthase family. LeuA type 1 subfamily. In terms of assembly, homodimer. Mn(2+) serves as cofactor.

It is found in the cytoplasm. The enzyme catalyses 3-methyl-2-oxobutanoate + acetyl-CoA + H2O = (2S)-2-isopropylmalate + CoA + H(+). It participates in amino-acid biosynthesis; L-leucine biosynthesis; L-leucine from 3-methyl-2-oxobutanoate: step 1/4. Its function is as follows. Catalyzes the condensation of the acetyl group of acetyl-CoA with 3-methyl-2-oxobutanoate (2-ketoisovalerate) to form 3-carboxy-3-hydroxy-4-methylpentanoate (2-isopropylmalate). In Caldanaerobacter subterraneus subsp. tengcongensis (strain DSM 15242 / JCM 11007 / NBRC 100824 / MB4) (Thermoanaerobacter tengcongensis), this protein is 2-isopropylmalate synthase 1.